A 399-amino-acid polypeptide reads, in one-letter code: Probable peptidoglycan glycosyltransferase FtsW (399 aa).

9 helical membrane-spanning segments follow: residues Leu-33 to Ile-53, Ile-71 to Phe-91, Ile-98 to His-118, Phe-160 to Glu-180, Asp-182 to Ala-202, Ile-204 to Leu-224, Ile-287 to Ile-307, Ile-324 to Asn-344, and Leu-359 to Leu-379.

Belongs to the SEDS family. FtsW subfamily.

It is found in the cell inner membrane. The enzyme catalyses [GlcNAc-(1-&gt;4)-Mur2Ac(oyl-L-Ala-gamma-D-Glu-L-Lys-D-Ala-D-Ala)](n)-di-trans,octa-cis-undecaprenyl diphosphate + beta-D-GlcNAc-(1-&gt;4)-Mur2Ac(oyl-L-Ala-gamma-D-Glu-L-Lys-D-Ala-D-Ala)-di-trans,octa-cis-undecaprenyl diphosphate = [GlcNAc-(1-&gt;4)-Mur2Ac(oyl-L-Ala-gamma-D-Glu-L-Lys-D-Ala-D-Ala)](n+1)-di-trans,octa-cis-undecaprenyl diphosphate + di-trans,octa-cis-undecaprenyl diphosphate + H(+). The protein operates within cell wall biogenesis; peptidoglycan biosynthesis. In terms of biological role, peptidoglycan polymerase that is essential for cell division. In Buchnera aphidicola subsp. Acyrthosiphon pisum (strain APS) (Acyrthosiphon pisum symbiotic bacterium), this protein is Probable peptidoglycan glycosyltransferase FtsW.